We begin with the raw amino-acid sequence, 1037 residues long: Probable aminoglycoside efflux pump (1037 aa).

Residues 1–9 are Cytoplasmic-facing; sequence MANFFIDRP. A helical membrane pass occupies residues 10–28; sequence IFAWVLAILLCLTGTLAIF. Residues 29-339 are Periplasmic-facing; sequence SLPVEQYPDL…TSFVKASIED (311 aa). The chain crosses the membrane as a helical span at residues 340-359; the sequence is VVKTLLEAIALVFLVMYLFL. At 360–365 the chain is on the cytoplasmic side; sequence QNFRAT. A helical transmembrane segment spans residues 366 to 385; that stretch reads LIPTIAVPVVLMGTFSVLYA. Over 386 to 391 the chain is Periplasmic; the sequence is FGYSVN. A helical membrane pass occupies residues 392–413; sequence TLTMFAMVLAIGLLVDDAIVVV. At 414 to 441 the chain is on the cytoplasmic side; that stretch reads ENVERIMSEEGLTPREATRKSMGQIQGA. Residues 442–460 form a helical membrane-spanning segment; the sequence is LVGIAMVLSAVFVPMAFFG. Topologically, residues 461 to 473 are periplasmic; the sequence is GTTGAIYRQFSIT. A helical transmembrane segment spans residues 474 to 496; that stretch reads IVAAMVLSVLVAMILTPALCATL. The Cytoplasmic segment spans residues 497–537; it reads LKPLKKGEHHGQKGFFAWFNQMFNRNAERYEKGVAKILHRS. A helical membrane pass occupies residues 538–556; sequence LRWIVIYVLLLGGMVFLFL. The Periplasmic segment spans residues 557 to 870; the sequence is RLPTSFLPLE…SYQERLSGAQ (314 aa). The chain crosses the membrane as a helical span at residues 871 to 890; the sequence is APALYAISLLVVFLCLAALY. Over 891 to 896 the chain is Cytoplasmic; that stretch reads ESWSVP. The helical transmembrane segment at 897 to 916 threads the bilayer; that stretch reads FSVMLVVPLGVIGALLATWM. Residues 917-922 are Periplasmic-facing; the sequence is RGLEND. The helical transmembrane segment at 923–944 threads the bilayer; sequence VYFQVGLLTVIGLSAKNAILIV. Residues 945–971 lie on the Cytoplasmic side of the membrane; it reads EFANEMNQKGHDLFEATLHACRQRLRP. Residues 972-990 traverse the membrane as a helical segment; the sequence is ILMTSLAFIFGVLPMATST. Over 991 to 1003 the chain is Periplasmic; that stretch reads GAGSGGQHAVGTG. Residues 1004-1026 traverse the membrane as a helical segment; sequence VMGGMISATILAIYFVPLFFVLV. Residues 1027-1037 lie on the Cytoplasmic side of the membrane; the sequence is RRRFPLKPRPE.

This sequence belongs to the resistance-nodulation-cell division (RND) (TC 2.A.6) family.

It localises to the cell inner membrane. Functionally, participates in the efflux of aminoglycosides. Confers resistance to a variety of these substances. In Escherichia coli (strain K12), this protein is Probable aminoglycoside efflux pump (acrD).